A 374-amino-acid chain; its full sequence is MAITVYLSCLLVLSMAGLAQGIKSSLRSQDPGPQPLELKQAFTLFQIQYNRSYSNPEEYARRLDIFAHNLAQAQQLEEEDLGTAEFGVTPFSDLTEEEFGRLYGHRRMDGEAPKVGREVGSEEWGESVPPTCDWRKLDGVISSVKKQESCSCCWAMAAAGNIEALWAIKYRQSVELSVQELLDCGRCGDGCRGGFVWDAFITVLNNSGLASEKDYPFQGQVKPHRCLAKKRTKVAWIQDFIMLPDNEQKIAWYLATQGPITVTINMKLLKLYKKGVIEATPTSCDPFLVDHSVLLVGFGKSESVADRRAGAAGAQPQSRRSIPFWILKNSWGTKWGXGGYFRLYRGNNTCGITKYPLTARVDQPAKKRPVSCPP.

An N-terminal signal peptide occupies residues 1–21 (MAITVYLSCLLVLSMAGLAQG). A propeptide spanning residues 22 to 127 (IKSSLRSQDP…EVGSEEWGES (106 aa)) is cleaved from the precursor. 2 disulfides stabilise this stretch: cysteine 150/cysteine 191 and cysteine 184/cysteine 226. Residue cysteine 153 is part of the active site. Residue asparagine 205 is glycosylated (N-linked (GlcNAc...) asparagine). Active-site residues include histidine 291 and asparagine 329. Asparagine 347 is a glycosylation site (N-linked (GlcNAc...) asparagine).

The protein belongs to the peptidase C1 family.

Its subcellular location is the endoplasmic reticulum. May have a specific function in the mechanism or regulation of T-cell cytolytic activity. The polypeptide is Cathepsin W (CTSW) (Felis catus (Cat)).